An 802-amino-acid chain; its full sequence is Phenylalanine--tRNA ligase beta subunit (802 aa).

The region spanning 38–148 is the tRNA-binding domain; it reads SKNFERVIVG…SEVPVGTDIS (111 aa). The region spanning 403–478 is the B5 domain; the sequence is VIQKKIFVLK…RVFGYHNIPA (76 aa). The Mg(2+) site is built by aspartate 456, aspartate 462, and aspartate 466. In terms of domain architecture, FDX-ACB spans 703–796; the sequence is SLYPRCSRDI…LQEKFNAILR (94 aa).

This sequence belongs to the phenylalanyl-tRNA synthetase beta subunit family. Type 1 subfamily. As to quaternary structure, tetramer of two alpha and two beta subunits. Mg(2+) serves as cofactor.

Its subcellular location is the cytoplasm. The enzyme catalyses tRNA(Phe) + L-phenylalanine + ATP = L-phenylalanyl-tRNA(Phe) + AMP + diphosphate + H(+). This Buchnera aphidicola subsp. Baizongia pistaciae (strain Bp) protein is Phenylalanine--tRNA ligase beta subunit.